The chain runs to 334 residues: uncharacterized protein (334 aa).

The protein belongs to the PAPS reductase family.

This is an uncharacterized protein from Escherichia phage 186 (Bacteriophage 186).